A 684-amino-acid polypeptide reads, in one-letter code: Beta-taxilin (684 aa).

The segment covering 1 to 26 has biased composition (polar residues); the sequence is MEANHSEQLSAERQSTPPGDSSSLPS. The segment at 1–132 is disordered; the sequence is MEANHSEQLS…KEPVSNKEQK (132 aa). The segment covering 45 to 64 has biased composition (basic and acidic residues); the sequence is PEKEASVHPDISEELNRQLE. Residues 93–107 show a composition bias toward acidic residues; the sequence is ESPDNEDGDCEETTE. 2 coiled-coil regions span residues 135 to 351 and 378 to 467; these read KKIL…VLKE and NEVF…SEKD. The segment covering 458-475 has biased composition (basic and acidic residues); it reads IRDAEISEKDDQSQHNSD. Disordered regions lie at residues 458 to 485, 514 to 632, and 646 to 684; these read IRDA…VSVD, ESTP…DVPA, and PACE…EGVD. 2 positions are modified to phosphoserine: S474 and S483. The segment covering 514–524 has biased composition (basic and acidic residues); sequence ESTPHQSKETQ. The segment covering 613 to 622 has biased composition (polar residues); sequence QAPQAPTEAS.

The protein belongs to the taxilin family. In terms of assembly, binds to the C-terminal coiled coil region of syntaxin family members STX1A, STX3A and STX4A. Has a preference for STX1A. As to expression, expressed in skeletal muscle.

Functionally, promotes motor nerve regeneration. May be involved in intracellular vesicle traffic. This chain is Beta-taxilin (TXLNB), found in Homo sapiens (Human).